We begin with the raw amino-acid sequence, 270 residues long: NAD kinase (270 aa).

D45 acts as the Proton acceptor in catalysis. NAD(+) is bound by residues 45 to 46 (DG), 121 to 122 (NE), R147, D149, 160 to 165 (TAYSKS), and A184.

The protein belongs to the NAD kinase family. A divalent metal cation is required as a cofactor.

The protein resides in the cytoplasm. The enzyme catalyses NAD(+) + ATP = ADP + NADP(+) + H(+). In terms of biological role, involved in the regulation of the intracellular balance of NAD and NADP, and is a key enzyme in the biosynthesis of NADP. Catalyzes specifically the phosphorylation on 2'-hydroxyl of the adenosine moiety of NAD to yield NADP. This is NAD kinase from Lactobacillus helveticus (strain DPC 4571).